Consider the following 467-residue polypeptide: MNNPDLPYRQALECLSQKQYNFTEVRRLLTEAFSAGHPAAAFELAKHLMDADSPYQDREQGMEMLRIAAEQGHPYARYNLAYIQELEGAPPETLIPLYRPLAEEGLPEAQVRLMYLLYASRHFEEALEWAKTSAKNNNPHGQYLLAQYCRYGTPPDFETAHLLYRKSAAQGLPEAHWQLGLQYRFGQGTKVDTAQAVNHLRAAAQQGYIPAYTPLAELILPTAPDEAVHWFQQAAQENDPDAHAALADIYLQGKHLERNHKLALHHAEAAAAERHPEGLRILGDICRYGLGIAPDTEKARHYYRQAAEAGSLSAYQKLISDSALNHPDQYGGIKDSAIRRQRAERLYQKAQALHYGLQCAPEYAAALKLYTEAAELGHSKAQTNLGSMYYFGQGMTADYNEARKWFEKAAAKKDSMAFYNLACIHYSGHGVEPDKEKACRYLQEAINNGYGQKSVLQELLQQWQNAV.

Sel1-like repeat units lie at residues 38 to 73, 107 to 138, 139 to 172, 173 to 208, 240 to 275, 276 to 311, 343 to 378, 379 to 414, and 415 to 450; these read PAAA…EQGH, PEAQ…KNNN, PHGQ…AQGL, PEAH…QQGY, PDAH…AERH, PEGL…EAGS, AERL…ELGH, SKAQ…AKKD, and SMAF…NNGY.

This is an uncharacterized protein from Neisseria meningitidis serogroup B (strain ATCC BAA-335 / MC58).